The following is a 256-amino-acid chain: Enolase-phosphatase E1 (256 aa).

Positions 14 and 16 each coordinate Mg(2+). Residues 142–143 (SS) and Lys-176 contribute to the substrate site. Asp-201 is a Mg(2+) binding site.

The protein belongs to the HAD-like hydrolase superfamily. MasA/MtnC family. Monomer. The cofactor is Mg(2+).

It localises to the cytoplasm. The protein localises to the nucleus. The catalysed reaction is 5-methylsulfanyl-2,3-dioxopentyl phosphate + H2O = 1,2-dihydroxy-5-(methylsulfanyl)pent-1-en-3-one + phosphate. Its pathway is amino-acid biosynthesis; L-methionine biosynthesis via salvage pathway; L-methionine from S-methyl-5-thio-alpha-D-ribose 1-phosphate: step 3/6. It participates in amino-acid biosynthesis; L-methionine biosynthesis via salvage pathway; L-methionine from S-methyl-5-thio-alpha-D-ribose 1-phosphate: step 4/6. Bifunctional enzyme that catalyzes the enolization of 2,3-diketo-5-methylthiopentyl-1-phosphate (DK-MTP-1-P) into the intermediate 2-hydroxy-3-keto-5-methylthiopentenyl-1-phosphate (HK-MTPenyl-1-P), which is then dephosphorylated to form the acireductone 1,2-dihydroxy-3-keto-5-methylthiopentene (DHK-MTPene). This is Enolase-phosphatase E1 from Drosophila erecta (Fruit fly).